The primary structure comprises 240 residues: Lactate utilization protein C (240 aa).

It belongs to the LutC/YkgG family.

Functionally, is involved in L-lactate degradation and allows cells to grow with lactate as the sole carbon source. This is Lactate utilization protein C from Bacillus licheniformis (strain ATCC 14580 / DSM 13 / JCM 2505 / CCUG 7422 / NBRC 12200 / NCIMB 9375 / NCTC 10341 / NRRL NRS-1264 / Gibson 46).